Here is a 314-residue protein sequence, read N- to C-terminus: Acetyl-coenzyme A carboxylase carboxyl transferase subunit beta (314 aa).

The CoA carboxyltransferase N-terminal domain occupies 44–311; it reads LMNKCPHCGT…VETWQASSPL (268 aa). The Zn(2+) site is built by Cys48, Cys51, Cys67, and Cys70. The C4-type zinc finger occupies 48–70; the sequence is CPHCGTIHYSKDLEKNLRVCKGC.

The protein belongs to the AccD/PCCB family. As to quaternary structure, acetyl-CoA carboxylase is a heterohexamer composed of biotin carboxyl carrier protein (AccB), biotin carboxylase (AccC) and two subunits each of ACCase subunit alpha (AccA) and ACCase subunit beta (AccD). Zn(2+) is required as a cofactor.

The protein resides in the cytoplasm. The catalysed reaction is N(6)-carboxybiotinyl-L-lysyl-[protein] + acetyl-CoA = N(6)-biotinyl-L-lysyl-[protein] + malonyl-CoA. It functions in the pathway lipid metabolism; malonyl-CoA biosynthesis; malonyl-CoA from acetyl-CoA: step 1/1. Component of the acetyl coenzyme A carboxylase (ACC) complex. Biotin carboxylase (BC) catalyzes the carboxylation of biotin on its carrier protein (BCCP) and then the CO(2) group is transferred by the transcarboxylase to acetyl-CoA to form malonyl-CoA. This is Acetyl-coenzyme A carboxylase carboxyl transferase subunit beta from Brevibacillus brevis (strain 47 / JCM 6285 / NBRC 100599).